Consider the following 330-residue polypeptide: Methionyl-tRNA formyltransferase (330 aa).

121 to 124 (SLLP) contacts (6S)-5,6,7,8-tetrahydrofolate.

The protein belongs to the Fmt family.

The catalysed reaction is L-methionyl-tRNA(fMet) + (6R)-10-formyltetrahydrofolate = N-formyl-L-methionyl-tRNA(fMet) + (6S)-5,6,7,8-tetrahydrofolate + H(+). In terms of biological role, attaches a formyl group to the free amino group of methionyl-tRNA(fMet). The formyl group appears to play a dual role in the initiator identity of N-formylmethionyl-tRNA by promoting its recognition by IF2 and preventing the misappropriation of this tRNA by the elongation apparatus. This Burkholderia cenocepacia (strain HI2424) protein is Methionyl-tRNA formyltransferase.